The primary structure comprises 406 residues: Arginine deiminase (406 aa).

Catalysis depends on Cys396, which acts as the Amidino-cysteine intermediate.

It belongs to the arginine deiminase family.

It localises to the cytoplasm. It catalyses the reaction L-arginine + H2O = L-citrulline + NH4(+). The protein operates within amino-acid degradation; L-arginine degradation via ADI pathway; carbamoyl phosphate from L-arginine: step 1/2. The sequence is that of Arginine deiminase from Vibrio vulnificus (strain YJ016).